A 225-amino-acid polypeptide reads, in one-letter code: Biosynthetic peptidoglycan transglycosylase (225 aa).

Residues 7–27 (SFLFKMVLILLIAPIVLVGVV) traverse the membrane as a helical segment.

The protein belongs to the glycosyltransferase 51 family.

Its subcellular location is the cell inner membrane. The catalysed reaction is [GlcNAc-(1-&gt;4)-Mur2Ac(oyl-L-Ala-gamma-D-Glu-L-Lys-D-Ala-D-Ala)](n)-di-trans,octa-cis-undecaprenyl diphosphate + beta-D-GlcNAc-(1-&gt;4)-Mur2Ac(oyl-L-Ala-gamma-D-Glu-L-Lys-D-Ala-D-Ala)-di-trans,octa-cis-undecaprenyl diphosphate = [GlcNAc-(1-&gt;4)-Mur2Ac(oyl-L-Ala-gamma-D-Glu-L-Lys-D-Ala-D-Ala)](n+1)-di-trans,octa-cis-undecaprenyl diphosphate + di-trans,octa-cis-undecaprenyl diphosphate + H(+). It functions in the pathway cell wall biogenesis; peptidoglycan biosynthesis. Its function is as follows. Peptidoglycan polymerase that catalyzes glycan chain elongation from lipid-linked precursors. This Vibrio parahaemolyticus serotype O3:K6 (strain RIMD 2210633) protein is Biosynthetic peptidoglycan transglycosylase.